A 1755-amino-acid polypeptide reads, in one-letter code: Deleted in lung and esophageal cancer protein 1 (1755 aa).

The segment covering 1 to 12 (METRSSKTRRSL) has biased composition (basic residues). Disordered stretches follow at residues 1–39 (METR…PSQP), 1339–1360 (PGPS…GSSS), and 1529–1553 (SQDG…EETA). The segment covering 30–39 (PAGSSSPSQP) has biased composition (low complexity).

As to quaternary structure, interacts with alpha- and beta-tubulin. Interacts with BBS2, BBS4, BBS5, MKKS, TCP1, CCT2, CCT3, CCT4, CCT5 and CCT7. As to expression, expressed in all tissues examined. Expression is highest in prostate and testis.

It localises to the cytoplasm. In terms of biological role, essential for spermatogenesis and male fertility. May play an important role in sperm head and tail formation. May act as a tumor suppressor by inhibiting cell proliferation. The polypeptide is Deleted in lung and esophageal cancer protein 1 (Homo sapiens (Human)).